The chain runs to 131 residues: Large ribosomal subunit protein eL14 (131 aa).

It belongs to the eukaryotic ribosomal protein eL14 family. Component of the large ribosomal subunit. Mature ribosomes consist of a small (40S) and a large (60S) subunit. The 40S subunit contains about 32 different proteins and 1 molecule of RNA (18S). The 60S subunit contains 45 different proteins and 3 molecules of RNA (25S, 5.8S and 5S).

The protein localises to the cytoplasm. Component of the ribosome, a large ribonucleoprotein complex responsible for the synthesis of proteins in the cell. The small ribosomal subunit (SSU) binds messenger RNAs (mRNAs) and translates the encoded message by selecting cognate aminoacyl-transfer RNA (tRNA) molecules. The large subunit (LSU) contains the ribosomal catalytic site termed the peptidyl transferase center (PTC), which catalyzes the formation of peptide bonds, thereby polymerizing the amino acids delivered by tRNAs into a polypeptide chain. The nascent polypeptides leave the ribosome through a tunnel in the LSU and interact with protein factors that function in enzymatic processing, targeting, and the membrane insertion of nascent chains at the exit of the ribosomal tunnel. The protein is Large ribosomal subunit protein eL14 of Candida albicans (strain SC5314 / ATCC MYA-2876) (Yeast).